We begin with the raw amino-acid sequence, 445 residues long: Phosphoglucosamine mutase (445 aa).

The Phosphoserine intermediate role is filled by Ser102. Residues Ser102, Asp241, Asp243, and Asp245 each coordinate Mg(2+). Ser102 carries the phosphoserine modification.

This sequence belongs to the phosphohexose mutase family. The cofactor is Mg(2+). Post-translationally, activated by phosphorylation.

The enzyme catalyses alpha-D-glucosamine 1-phosphate = D-glucosamine 6-phosphate. Functionally, catalyzes the conversion of glucosamine-6-phosphate to glucosamine-1-phosphate. The protein is Phosphoglucosamine mutase of Escherichia coli O127:H6 (strain E2348/69 / EPEC).